The following is a 331-amino-acid chain: Biotin synthase (331 aa).

The Radical SAM core domain occupies 43–267 (NTVQVSTLLS…LMPASYVRLS (225 aa)). Residues C58, C62, and C65 each contribute to the [4Fe-4S] cluster site. Positions 102, 133, 193, and 265 each coordinate [2Fe-2S] cluster.

The protein belongs to the radical SAM superfamily. Biotin synthase family. In terms of assembly, homodimer. The cofactor is [4Fe-4S] cluster. [2Fe-2S] cluster is required as a cofactor.

The catalysed reaction is (4R,5S)-dethiobiotin + (sulfur carrier)-SH + 2 reduced [2Fe-2S]-[ferredoxin] + 2 S-adenosyl-L-methionine = (sulfur carrier)-H + biotin + 2 5'-deoxyadenosine + 2 L-methionine + 2 oxidized [2Fe-2S]-[ferredoxin]. Its pathway is cofactor biosynthesis; biotin biosynthesis; biotin from 7,8-diaminononanoate: step 2/2. In terms of biological role, catalyzes the conversion of dethiobiotin (DTB) to biotin by the insertion of a sulfur atom into dethiobiotin via a radical-based mechanism. The sequence is that of Biotin synthase from Alkalilimnicola ehrlichii (strain ATCC BAA-1101 / DSM 17681 / MLHE-1).